The following is a 273-amino-acid chain: 2-dehydro-3-deoxyphosphooctonate aldolase (273 aa).

It belongs to the KdsA family.

It is found in the cytoplasm. The catalysed reaction is D-arabinose 5-phosphate + phosphoenolpyruvate + H2O = 3-deoxy-alpha-D-manno-2-octulosonate-8-phosphate + phosphate. It functions in the pathway carbohydrate biosynthesis; 3-deoxy-D-manno-octulosonate biosynthesis; 3-deoxy-D-manno-octulosonate from D-ribulose 5-phosphate: step 2/3. The protein operates within bacterial outer membrane biogenesis; lipopolysaccharide biosynthesis. The sequence is that of 2-dehydro-3-deoxyphosphooctonate aldolase from Geobacter sp. (strain M21).